Reading from the N-terminus, the 727-residue chain is Glucans biosynthesis glucosyltransferase H (727 aa).

The segment at 18–41 is disordered; that stretch reads SAMPNERPGAMEPQKLSKMPEGFP. Helical transmembrane passes span 58 to 78, 97 to 117, 278 to 298, 408 to 428, 460 to 480, 496 to 516, and 572 to 592; these read FLVV…MGAV, VNFC…LILL, LQQF…GWWV, IMAY…LMLA, LFYI…LLLL, IFSV…MMFI, and LLAW…ISAW.

This sequence belongs to the glycosyltransferase 2 family. OpgH subfamily.

Its subcellular location is the cell inner membrane. Its pathway is glycan metabolism; osmoregulated periplasmic glucan (OPG) biosynthesis. Functionally, involved in the biosynthesis of osmoregulated periplasmic glucans (OPGs). The polypeptide is Glucans biosynthesis glucosyltransferase H (Shewanella baltica (strain OS155 / ATCC BAA-1091)).